A 1123-amino-acid chain; its full sequence is Polyprotein of EF-Ts, chloroplastic (1123 aa).

A chloroplast-targeting transit peptide spans methionine 1–serine 73. The disordered stretch occupies residues arginine 68 to valine 141. Positions threonine 94–alanine 103 are enriched in acidic residues. Residues threonine 106–serine 119 show a composition bias toward low complexity. Residues glycine 143–arginine 212 enclose the S1 motif 1 domain. Residues threonine 213–threonine 258 are disordered. Residues glycine 231–arginine 244 show a composition bias toward polar residues. Positions glutamine 245 to serine 254 are enriched in basic and acidic residues. Residues glycine 263–lysine 331 enclose the S1 motif 2 domain. 2 disordered regions span residues lysine 443 to threonine 670 and valine 894 to lysine 923. Residues glutamate 486 to phenylalanine 501 are compositionally biased toward polar residues. Low complexity predominate over residues serine 551 to glutamate 587. Over residues lysine 630–isoleucine 639 the composition is skewed to acidic residues. Low complexity-rich tracts occupy residues alanine 657 to threonine 670 and valine 894 to proline 903. Residues proline 908–lysine 923 show a composition bias toward basic and acidic residues.

It belongs to the EF-Ts family. In terms of assembly, component of the chloroplast ribosome 30S and 70S subunits, as well as polysomes. Component of the chloroplast ribosome 70S subunit, and at low levels, present in polysomes. As to quaternary structure, associates transiently with chloroplast polysomes.

It is found in the plastid. The protein resides in the chloroplast. Its function is as follows. Associates with the EF-Tu.GDP complex and induces the exchange of GDP to GTP. It remains bound to the aminoacyl-tRNA.EF-Tu.GTP complex up to the GTP hydrolysis stage on the ribosome. In terms of biological role, binds to psbD and psbA 5'-untranslated regions (UTRs) in vitro. This is Polyprotein of EF-Ts, chloroplastic from Oryza sativa subsp. indica (Rice).